Here is a 269-residue protein sequence, read N- to C-terminus: Nitrogen regulatory protein DAL80 (269 aa).

The GATA-type zinc finger occupies 31-55 (CQNCFTVKTPLWRRDEHGTVLCNAC).

The protein resides in the nucleus. In terms of biological role, negative regulator of multiple nitrogen catabolic genes including the allantoin pathway genes. The protein is Nitrogen regulatory protein DAL80 (DAL80) of Saccharomyces cerevisiae (strain ATCC 204508 / S288c) (Baker's yeast).